We begin with the raw amino-acid sequence, 143 residues long: Large ribosomal subunit protein uL16 (143 aa).

The protein belongs to the universal ribosomal protein uL16 family. As to quaternary structure, part of the 50S ribosomal subunit.

Functionally, binds 23S rRNA and is also seen to make contacts with the A and possibly P site tRNAs. The chain is Large ribosomal subunit protein uL16 from Oenococcus oeni (strain ATCC BAA-331 / PSU-1).